The primary structure comprises 275 residues: Galaxin-2 (275 aa).

The signal sequence occupies residues 1-20 (MTRFTSIGLCAVLLFNVCSC).

In terms of tissue distribution, component of the acid-insoluble and acid-soluble organic matrix of the aragonitic skeleton (at protein level).

Its subcellular location is the secreted. The protein is Galaxin-2 of Acropora millepora (Staghorn coral).